The following is a 266-amino-acid chain: Undecaprenyl-diphosphatase (266 aa).

8 helical membrane-spanning segments follow: residues 1–21 (MMSW…TEFL), 43–63 (ASVF…VIYW), 81–101 (LYGI…GFLF), 107–127 (TLFT…FMLI), 145–165 (LTPK…WPGF), 183–203 (HLAA…ATGY), 219–239 (LFIT…KVFI), and 245–265 (ISLR…YLCI).

This sequence belongs to the UppP family.

The protein localises to the cell membrane. It catalyses the reaction di-trans,octa-cis-undecaprenyl diphosphate + H2O = di-trans,octa-cis-undecaprenyl phosphate + phosphate + H(+). In terms of biological role, catalyzes the dephosphorylation of undecaprenyl diphosphate (UPP). Confers resistance to bacitracin. The polypeptide is Undecaprenyl-diphosphatase (Lawsonia intracellularis (strain PHE/MN1-00)).